Here is a 115-residue protein sequence, read N- to C-terminus: Large ribosomal subunit protein uL22 (115 aa).

It belongs to the universal ribosomal protein uL22 family. As to quaternary structure, part of the 50S ribosomal subunit.

This protein binds specifically to 23S rRNA; its binding is stimulated by other ribosomal proteins, e.g. L4, L17, and L20. It is important during the early stages of 50S assembly. It makes multiple contacts with different domains of the 23S rRNA in the assembled 50S subunit and ribosome. In terms of biological role, the globular domain of the protein is located near the polypeptide exit tunnel on the outside of the subunit, while an extended beta-hairpin is found that lines the wall of the exit tunnel in the center of the 70S ribosome. This chain is Large ribosomal subunit protein uL22, found in Limosilactobacillus fermentum (strain NBRC 3956 / LMG 18251) (Lactobacillus fermentum).